We begin with the raw amino-acid sequence, 317 residues long: Transaldolase (317 aa).

Lysine 126 functions as the Schiff-base intermediate with substrate in the catalytic mechanism.

Belongs to the transaldolase family. Type 1 subfamily. Homodimer.

The protein localises to the cytoplasm. It catalyses the reaction D-sedoheptulose 7-phosphate + D-glyceraldehyde 3-phosphate = D-erythrose 4-phosphate + beta-D-fructose 6-phosphate. It participates in carbohydrate degradation; pentose phosphate pathway; D-glyceraldehyde 3-phosphate and beta-D-fructose 6-phosphate from D-ribose 5-phosphate and D-xylulose 5-phosphate (non-oxidative stage): step 2/3. Transaldolase is important for the balance of metabolites in the pentose-phosphate pathway. This chain is Transaldolase, found in Burkholderia multivorans (strain ATCC 17616 / 249).